The chain runs to 161 residues: UPF0178 protein Rsph17025_3122 (161 aa).

Belongs to the UPF0178 family.

This is UPF0178 protein Rsph17025_3122 from Cereibacter sphaeroides (strain ATCC 17025 / ATH 2.4.3) (Rhodobacter sphaeroides).